A 104-amino-acid polypeptide reads, in one-letter code: Large ribosomal subunit protein bL21 (104 aa).

It belongs to the bacterial ribosomal protein bL21 family. As to quaternary structure, part of the 50S ribosomal subunit. Contacts protein L20.

This protein binds to 23S rRNA in the presence of protein L20. The sequence is that of Large ribosomal subunit protein bL21 from Streptococcus thermophilus (strain ATCC BAA-491 / LMD-9).